Reading from the N-terminus, the 232-residue chain is N-(5'-phosphoribosyl)anthranilate isomerase (232 aa).

Belongs to the TrpF family.

The catalysed reaction is N-(5-phospho-beta-D-ribosyl)anthranilate = 1-(2-carboxyphenylamino)-1-deoxy-D-ribulose 5-phosphate. The protein operates within amino-acid biosynthesis; L-tryptophan biosynthesis; L-tryptophan from chorismate: step 3/5. This chain is N-(5'-phosphoribosyl)anthranilate isomerase (TRP1), found in Lipomyces starkeyi (Oleaginous yeast).